The sequence spans 156 residues: Phosphopantetheine adenylyltransferase (156 aa).

Thr9 contacts substrate. Residues 9–10 (TF) and His17 contribute to the ATP site. Substrate contacts are provided by Lys41, Leu73, and Arg87. Residues 88–90 (GVR), Glu98, and 123–129 (WAFVSST) each bind ATP.

Belongs to the bacterial CoaD family. As to quaternary structure, homohexamer. Mg(2+) is required as a cofactor.

Its subcellular location is the cytoplasm. The enzyme catalyses (R)-4'-phosphopantetheine + ATP + H(+) = 3'-dephospho-CoA + diphosphate. It functions in the pathway cofactor biosynthesis; coenzyme A biosynthesis; CoA from (R)-pantothenate: step 4/5. Functionally, reversibly transfers an adenylyl group from ATP to 4'-phosphopantetheine, yielding dephospho-CoA (dPCoA) and pyrophosphate. The protein is Phosphopantetheine adenylyltransferase of Haemophilus influenzae (strain ATCC 51907 / DSM 11121 / KW20 / Rd).